Reading from the N-terminus, the 657-residue chain is MRRSSDPSANKKKWTKASNWRPRMVRWQRQLARVNALESTLQAEDDQTIRKRSLALRYRAMAGEKLSELLPEAYALCREAGRRSLSMRHYDVQILGGIALFEGHITEMQTGEGKTLTATLPLYLHSLVGKGAHLATVNDYLAKRDAEWMMPLFEMLGVSVGIIQTEDDQGGRRKSYGAAITYGTAKEFGFDFLRDRLLLRAQNRMQTEMLGSGDGGFSNSGDQVVMRGMHFCLVDEADSILIDEARTPLIIGSIEDTVRDQIIETYKWAAENAPLFELDEHFEIDDETKRYELTARGRSKVRALPKSDLVRTMGLVDMYEYIERSIKTHREFLLDRQYVIRPSEKDPNVDEIVIVDEFTGRLAEGRKWRDGIHQSIEAKEGVEISVPTGQAARITVQDLFLRYPHLAGMTGTAATSAGELRKIYRTPVVRVPTNRPPQRIQLPSRVFGTLTSKFEAIAKEVEEIHATGRPVLVGTRSIDKSVLLSKLLDDLGIEHEVLNANNVEREAEIVAEAGGRGKVTVATNMAGRGTDIKLSNDVEQIGGMHVICTELHDAARIDRQLIGRCGRQGDRGSYRQYLSLDDDILKGGYGAIKYEKLKKRGEATSGSVDRLAAMFHKAQRKVERRHFRDRMVLMHHEKERKKMQREIGQDPYLDTPD.

ATP-binding positions include glutamine 93, 111-115 (GEGKT), and aspartate 531.

This sequence belongs to the SecA family. In terms of assembly, monomer and homodimer. Part of the essential Sec protein translocation apparatus which comprises SecA, SecYEG and auxiliary proteins SecDF. Other proteins may also be involved.

It is found in the cell inner membrane. The protein resides in the cytoplasm. It carries out the reaction ATP + H2O + cellular proteinSide 1 = ADP + phosphate + cellular proteinSide 2.. Its function is as follows. Part of the Sec protein translocase complex. Interacts with the SecYEG preprotein conducting channel. Has a central role in coupling the hydrolysis of ATP to the transfer of proteins into and across the cell membrane, serving as an ATP-driven molecular motor driving the stepwise translocation of polypeptide chains across the membrane. The sequence is that of Protein translocase subunit SecA 2 from Rhodopirellula baltica (strain DSM 10527 / NCIMB 13988 / SH1).